A 227-amino-acid polypeptide reads, in one-letter code: MEEALKTSHRAIRSFVLRQGRITAAQTRAVAEYLPARQIDAHAEWRDPWNNQRPLMLEIGFGNGEHLAAIAAQRPTWGCIGIEVHTPGVGSLLLQLVEAGTDNVRIVHDDAVTWLKTLPDAILRCIIIQFPDPWPKKRQQKRRLIQPDFAAVLCRLLQPGGELQLATDWADYAGQMLTVLNATPGLQNADADNGYVFRPDNRILTRFERRGQRLGHAVYDLCYRRIP.

4 residues coordinate S-adenosyl-L-methionine: Glu-58, Glu-83, Asp-110, and Asp-132. The active site involves Asp-132. Residues Lys-136, Asp-168, and 205 to 208 contribute to the substrate site; that span reads TRFE.

Belongs to the class I-like SAM-binding methyltransferase superfamily. TrmB family.

It carries out the reaction guanosine(46) in tRNA + S-adenosyl-L-methionine = N(7)-methylguanosine(46) in tRNA + S-adenosyl-L-homocysteine. It participates in tRNA modification; N(7)-methylguanine-tRNA biosynthesis. Functionally, catalyzes the formation of N(7)-methylguanine at position 46 (m7G46) in tRNA. The chain is tRNA (guanine-N(7)-)-methyltransferase from Acidithiobacillus ferrooxidans (strain ATCC 23270 / DSM 14882 / CIP 104768 / NCIMB 8455) (Ferrobacillus ferrooxidans (strain ATCC 23270)).